Here is a 438-residue protein sequence, read N- to C-terminus: ATP-dependent RNA helicase sub2 (438 aa).

Low complexity predominate over residues T23 to T36. Residues T23 to T42 are disordered. A Q motif motif is present at residues T58 to I86. Positions I86 to V261 constitute a Helicase ATP-binding domain. ATP is bound at residue A99–T106. Residues D208–D211 carry the DEAD box motif. The 146-residue stretch at K289–S434 folds into the Helicase C-terminal domain.

This sequence belongs to the DEAD box helicase family. DECD subfamily.

Its subcellular location is the nucleus. The catalysed reaction is ATP + H2O = ADP + phosphate + H(+). Functionally, ATP-binding RNA helicase involved in transcription elongation and required for the export of mRNA out of the nucleus. SUB2 also plays a role in pre-mRNA splicing and spliceosome assembly. May be involved in rDNA and telomeric silencing, and maintenance of genome integrity. The chain is ATP-dependent RNA helicase sub2 (sub2) from Aspergillus terreus (strain NIH 2624 / FGSC A1156).